The primary structure comprises 796 residues: Nuclear GTPase SLIP-GC (796 aa).

G107–S114 is a GTP binding site. 2 coiled-coil regions span residues S158–D185 and G742–S776.

It localises to the nucleus speckle. Functionally, nuclear GTPase found in germinal center B-cells, where it may inhibit function of the activation-induced cytidine deaminase AICDA. Reduces somatic hypermutation in B-cells which may enhance genome stability. This chain is Nuclear GTPase SLIP-GC, found in Mus musculus (Mouse).